A 269-amino-acid polypeptide reads, in one-letter code: Formamidopyrimidine-DNA glycosylase (269 aa).

The Schiff-base intermediate with DNA role is filled by Pro-2. The active-site Proton donor is the Glu-3. Residue Lys-57 is the Proton donor; for beta-elimination activity of the active site. Residues His-90, Arg-109, and Lys-150 each coordinate DNA. The segment at 235 to 269 adopts an FPG-type zinc-finger fold; sequence QVYGRAGELCRRCGNVIEIAKHGQRSTFFCRHCQH. The Proton donor; for delta-elimination activity role is filled by Arg-259.

The protein belongs to the FPG family. As to quaternary structure, monomer. The cofactor is Zn(2+).

The enzyme catalyses Hydrolysis of DNA containing ring-opened 7-methylguanine residues, releasing 2,6-diamino-4-hydroxy-5-(N-methyl)formamidopyrimidine.. The catalysed reaction is 2'-deoxyribonucleotide-(2'-deoxyribose 5'-phosphate)-2'-deoxyribonucleotide-DNA = a 3'-end 2'-deoxyribonucleotide-(2,3-dehydro-2,3-deoxyribose 5'-phosphate)-DNA + a 5'-end 5'-phospho-2'-deoxyribonucleoside-DNA + H(+). Involved in base excision repair of DNA damaged by oxidation or by mutagenic agents. Acts as a DNA glycosylase that recognizes and removes damaged bases. Has a preference for oxidized purines, such as 7,8-dihydro-8-oxoguanine (8-oxoG). Has AP (apurinic/apyrimidinic) lyase activity and introduces nicks in the DNA strand. Cleaves the DNA backbone by beta-delta elimination to generate a single-strand break at the site of the removed base with both 3'- and 5'-phosphates. The protein is Formamidopyrimidine-DNA glycosylase of Yersinia enterocolitica serotype O:8 / biotype 1B (strain NCTC 13174 / 8081).